We begin with the raw amino-acid sequence, 100 residues long: Small ubiquitin-related modifier 1 (100 aa).

The span at 1–12 (MSANQEEDKKPG) shows a compositional bias: basic and acidic residues. The interval 1–21 (MSANQEEDKKPGDGGAHINLK) is disordered. One can recognise a Ubiquitin-like domain in the interval 16–93 (AHINLKVKGQ…IDAMLHQTGG (78 aa)). A Glycyl lysine isopeptide (Gly-Lys) (interchain with K-? in acceptor proteins) cross-link involves residue Gly93.

It belongs to the ubiquitin family. SUMO subfamily. As to quaternary structure, interacts with SAE2, SCE1, SIZ1 and MMS21. Interacts with HSFA2. Covalently attached to ABI5, FLD, GTE3, HSFA2 and ICE1.

The protein localises to the nucleus. Its subcellular location is the cytoplasm. In terms of biological role, ubiquitin-like protein which can be covalently attached to target lysines as a monomer. Does not seem to be involved in protein degradation and may function as an antagonist of ubiquitin in the degradation process. Required for the massive protein sumoylation in the nucleus induced by heat shock and controlled by SIZ1. Involved in the regulation of the heat stress transcription factor HSFA2 in acquired thermotolerance. In Arabidopsis thaliana (Mouse-ear cress), this protein is Small ubiquitin-related modifier 1.